The sequence spans 194 residues: Probable GTP-binding protein EngB (194 aa).

The EngB-type G domain maps to 19–193 (DCIQICFWGR…VLFIEENIFK (175 aa)). Residues 27 to 34 (GRSNVGKS), 53 to 57 (GRTQF), 70 to 73 (DLPG), 137 to 140 (TKID), and 172 to 174 (VSS) each bind GTP. Positions 34 and 55 each coordinate Mg(2+).

This sequence belongs to the TRAFAC class TrmE-Era-EngA-EngB-Septin-like GTPase superfamily. EngB GTPase family. Mg(2+) serves as cofactor.

Its function is as follows. Necessary for normal cell division and for the maintenance of normal septation. The polypeptide is Probable GTP-binding protein EngB (Mycoplasmopsis agalactiae (strain NCTC 10123 / CIP 59.7 / PG2) (Mycoplasma agalactiae)).